We begin with the raw amino-acid sequence, 218 residues long: Thiopurine S-methyltransferase (218 aa).

The S-adenosyl-L-methionine site is built by tryptophan 10, leucine 45, glutamate 66, and arginine 123.

The protein belongs to the class I-like SAM-binding methyltransferase superfamily. TPMT family.

The protein resides in the cytoplasm. The enzyme catalyses S-adenosyl-L-methionine + a thiopurine = S-adenosyl-L-homocysteine + a thiopurine S-methylether.. This is Thiopurine S-methyltransferase from Xanthomonas campestris pv. campestris (strain 8004).